The primary structure comprises 397 residues: CCA-adding enzyme (397 aa).

Glycine 26 and arginine 29 together coordinate ATP. CTP-binding residues include glycine 26 and arginine 29. Mg(2+) is bound by residues aspartate 39 and aspartate 41. Residues arginine 110, aspartate 153, arginine 156, arginine 159, and arginine 162 each contribute to the ATP site. CTP contacts are provided by arginine 110, aspartate 153, arginine 156, arginine 159, and arginine 162.

The protein belongs to the tRNA nucleotidyltransferase/poly(A) polymerase family. Bacterial CCA-adding enzyme type 3 subfamily. In terms of assembly, homodimer. Mg(2+) is required as a cofactor.

It carries out the reaction a tRNA precursor + 2 CTP + ATP = a tRNA with a 3' CCA end + 3 diphosphate. The catalysed reaction is a tRNA with a 3' CCA end + 2 CTP + ATP = a tRNA with a 3' CCACCA end + 3 diphosphate. Functionally, catalyzes the addition and repair of the essential 3'-terminal CCA sequence in tRNAs without using a nucleic acid template. Adds these three nucleotides in the order of C, C, and A to the tRNA nucleotide-73, using CTP and ATP as substrates and producing inorganic pyrophosphate. tRNA 3'-terminal CCA addition is required both for tRNA processing and repair. Also involved in tRNA surveillance by mediating tandem CCA addition to generate a CCACCA at the 3' terminus of unstable tRNAs. While stable tRNAs receive only 3'-terminal CCA, unstable tRNAs are marked with CCACCA and rapidly degraded. This chain is CCA-adding enzyme, found in Bacillus mycoides (strain KBAB4) (Bacillus weihenstephanensis).